We begin with the raw amino-acid sequence, 100 residues long: Large ribosomal subunit protein uL23 (100 aa).

The protein belongs to the universal ribosomal protein uL23 family. In terms of assembly, part of the 50S ribosomal subunit. Contacts protein L29, and trigger factor when it is bound to the ribosome.

One of the early assembly proteins it binds 23S rRNA. One of the proteins that surrounds the polypeptide exit tunnel on the outside of the ribosome. Forms the main docking site for trigger factor binding to the ribosome. This is Large ribosomal subunit protein uL23 from Yersinia enterocolitica serotype O:8 / biotype 1B (strain NCTC 13174 / 8081).